Reading from the N-terminus, the 357-residue chain is MDAPRINKWLKPLSALYGVGVRLRNYLFDKNVLISNSFDIPIVCVGNITIGGTGKTPHVEYLIRLLHPRYRIAVVSRGYKRKTKGMIVATEGSTAWDIGDEPRQIKRKYPDLTVIVDADRSRAIGYLCDLAEEQRPQLIVLDDGFQHRKVKADLNIVLTDYNRILTKDYLLPAGRLREPAGSIQRADMVILTKCPDDLAPIDLRAAKRDLALYPHQKLFFSKFMYGQGLKPLFSDQSPSAEVRSALAIAGIASPKLFFREIRTRFPSGTDRIYPDHHEFTDREVCLLIQDWHELHRKDANAIVVCTEKDAMRLALRQSSFPQEMQERFYYLPVEVKLMFDQEKVFVDRLLGVIQHKK.

49 to 56 (TIGGTGKT) contributes to the ATP binding site.

Belongs to the LpxK family.

The catalysed reaction is a lipid A disaccharide + ATP = a lipid IVA + ADP + H(+). It functions in the pathway glycolipid biosynthesis; lipid IV(A) biosynthesis; lipid IV(A) from (3R)-3-hydroxytetradecanoyl-[acyl-carrier-protein] and UDP-N-acetyl-alpha-D-glucosamine: step 6/6. Transfers the gamma-phosphate of ATP to the 4'-position of a tetraacyldisaccharide 1-phosphate intermediate (termed DS-1-P) to form tetraacyldisaccharide 1,4'-bis-phosphate (lipid IVA). In Porphyromonas gingivalis (strain ATCC 33277 / DSM 20709 / CIP 103683 / JCM 12257 / NCTC 11834 / 2561), this protein is Tetraacyldisaccharide 4'-kinase.